Here is a 383-residue protein sequence, read N- to C-terminus: S-adenosylmethionine synthase (383 aa).

His15 provides a ligand contact to ATP. Asp17 lines the Mg(2+) pocket. A K(+)-binding site is contributed by Glu43. L-methionine is bound by residues Glu56 and Gln99. Residues 99–109 form a flexible loop region; sequence QSPDINQGVDR. Residues 164 to 166, 230 to 231, Asp239, 245 to 246, Ala262, and Lys266 each bind ATP; these read DAK, RF, and RK. Asp239 serves as a coordination point for L-methionine. Lys270 serves as a coordination point for L-methionine.

The protein belongs to the AdoMet synthase family. As to quaternary structure, homotetramer; dimer of dimers. It depends on Mg(2+) as a cofactor. Requires K(+) as cofactor.

The protein localises to the cytoplasm. It carries out the reaction L-methionine + ATP + H2O = S-adenosyl-L-methionine + phosphate + diphosphate. It participates in amino-acid biosynthesis; S-adenosyl-L-methionine biosynthesis; S-adenosyl-L-methionine from L-methionine: step 1/1. Catalyzes the formation of S-adenosylmethionine (AdoMet) from methionine and ATP. The overall synthetic reaction is composed of two sequential steps, AdoMet formation and the subsequent tripolyphosphate hydrolysis which occurs prior to release of AdoMet from the enzyme. The chain is S-adenosylmethionine synthase from Shewanella sp. (strain W3-18-1).